A 364-amino-acid chain; its full sequence is Anhydro-N-acetylmuramic acid kinase (364 aa).

ATP is bound at residue Gly12 to Asp19.

The protein belongs to the anhydro-N-acetylmuramic acid kinase family.

The catalysed reaction is 1,6-anhydro-N-acetyl-beta-muramate + ATP + H2O = N-acetyl-D-muramate 6-phosphate + ADP + H(+). Its pathway is amino-sugar metabolism; 1,6-anhydro-N-acetylmuramate degradation. The protein operates within cell wall biogenesis; peptidoglycan recycling. Catalyzes the specific phosphorylation of 1,6-anhydro-N-acetylmuramic acid (anhMurNAc) with the simultaneous cleavage of the 1,6-anhydro ring, generating MurNAc-6-P. Is required for the utilization of anhMurNAc either imported from the medium or derived from its own cell wall murein, and thus plays a role in cell wall recycling. In Gamma-proteobacterium EBAC31A08, this protein is Anhydro-N-acetylmuramic acid kinase.